Consider the following 472-residue polypeptide: Hepatocyte nuclear factor 3-alpha (472 aa).

A DNA-binding region (fork-head) is located at residues 169–260; the sequence is AKPPYSYISL…GNMFENGCYL (92 aa). Residues 269–392 are disordered; that stretch reads EKQPGAGGGG…ESQLHLKGDP (124 aa). Residues 273-289 show a composition bias toward gly residues; that stretch reads GAGGGGGSGSGGSGAKG. Phosphoserine occurs at positions 307 and 331. 2 stretches are compositionally biased toward low complexity: residues 322–332 and 351–366; these read GAPAPGPAASP and TPAS…GPGA.

As to quaternary structure, binds DNA as a monomer. Interacts with FOXA2. Interacts with NKX2-1. Interacts with HDAC7. Interacts with the histone H3-H4 heterodimer. Associates with nucleosomes containing histone H2A. Interacts with AR. Interacts with NR0B2. In terms of tissue distribution, highly expressed in prostate and ESR1-positive breast tumors. Overexpressed in esophageal and lung adenocarcinomas.

The protein resides in the nucleus. Transcription factor that is involved in embryonic development, establishment of tissue-specific gene expression and regulation of gene expression in differentiated tissues. Is thought to act as a 'pioneer' factor opening the compacted chromatin for other proteins through interactions with nucleosomal core histones and thereby replacing linker histones at target enhancer and/or promoter sites. Binds DNA with the consensus sequence 5'-[AC]A[AT]T[AG]TT[GT][AG][CT]T[CT]-3'. Proposed to play a role in translating the epigenetic signatures into cell type-specific enhancer-driven transcriptional programs. Its differential recruitment to chromatin is dependent on distribution of histone H3 methylated at 'Lys-5' (H3K4me2) in estrogen-regulated genes. Involved in the development of multiple endoderm-derived organ systems such as liver, pancreas, lung and prostate; FOXA1 and FOXA2 seem to have at least in part redundant roles. Modulates the transcriptional activity of nuclear hormone receptors. Is involved in ESR1-mediated transcription; required for ESR1 binding to the NKX2-1 promoter in breast cancer cells; binds to the RPRM promoter and is required for the estrogen-induced repression of RPRM. Involved in regulation of apoptosis by inhibiting the expression of BCL2. Involved in cell cycle regulation by activating expression of CDKN1B, alone or in conjunction with BRCA1. Originally described as a transcription activator for a number of liver genes such as AFP, albumin, tyrosine aminotransferase, PEPCK, etc. Interacts with the cis-acting regulatory regions of these genes. Involved in glucose homeostasis. This Homo sapiens (Human) protein is Hepatocyte nuclear factor 3-alpha (FOXA1).